The chain runs to 63 residues: Disintegrin schistatin-like subunit B (63 aa).

The region spanning 1 to 63 (NSVNPCCDPQ…TPDCPRNRYN (63 aa)) is the Disintegrin domain. Disulfide bonds link Cys-6-Cys-29, Cys-20-Cys-26, Cys-25-Cys-50, and Cys-38-Cys-57. The short motif at 42-44 (RGD) is the Cell attachment site element.

Belongs to the disintegrin family. Dimeric disintegrin subfamily. Heterodimer with subunit A; disulfide-linked. As to expression, expressed by the venom gland.

Its subcellular location is the secreted. In terms of biological role, may bind to both alpha-IIb/beta-3 (ITGA2B/ITGB3) and alpha-V/beta-3 (ITGAV/ITGB3) integrins, and may inhibit platelet aggregation. This Echis carinatus (Saw-scaled viper) protein is Disintegrin schistatin-like subunit B.